Consider the following 311-residue polypeptide: Olfactory receptor 5L2 (311 aa).

Over 1–25 (MGKENCTTVAEFILLGLSDVPELRV) the chain is Extracellular. Asparagine 5 carries an N-linked (GlcNAc...) asparagine glycan. The helical transmembrane segment at 26–46 (CLFLLFLLIYGVTLLANLGMT) threads the bilayer. Topologically, residues 47 to 54 (ALIQVSSR) are cytoplasmic. A helical transmembrane segment spans residues 55–75 (LHTPVYFFLSHLSFVDFCYSS). Residues 76 to 99 (IIVPKMLANIFNKDKAISFLGCMV) lie on the Extracellular side of the membrane. Cysteine 97 and cysteine 189 are disulfide-bonded. The chain crosses the membrane as a helical span at residues 100–120 (QFYLFCTCGVTEVFLLAVMAY). Topologically, residues 121-139 (DRFVAICNPLLYMVTMSQK) are cytoplasmic. A helical transmembrane segment spans residues 140 to 160 (LRVELTSCCYFCGTVCSLIHS). At 161 to 196 (SLALRILFYRSNVINHFFCDLPPLLSLACSDVTVNE) the chain is on the extracellular side. N-linked (GlcNAc...) asparagine glycosylation is present at asparagine 195. A helical transmembrane segment spans residues 197–217 (TLLFLVATLNESVTIMIILTS). The Cytoplasmic segment spans residues 218–237 (YLLILTTILKIHSAESRHKA). Residues 238–258 (FSTCASHLTAITVSHGTILYI) form a helical membrane-spanning segment. Over 259–271 (YCRPSSGNSGDVD) the chain is Extracellular. Residues 272-292 (KVATVFYTVVIPMLNPLIYSL) traverse the membrane as a helical segment. Topologically, residues 293–311 (RNKDVNKALRKVMGSKIHS) are cytoplasmic.

This sequence belongs to the G-protein coupled receptor 1 family.

The protein resides in the cell membrane. Odorant receptor. This Homo sapiens (Human) protein is Olfactory receptor 5L2 (OR5L2).